The sequence spans 342 residues: Trans-3-hydroxy-L-proline dehydratase (342 aa).

The Proton acceptor role is filled by S90. Substrate contacts are provided by residues 91-92, D252, and 257-258; these read GS and GT.

Belongs to the proline racemase family.

The catalysed reaction is trans-3-hydroxy-L-proline = 1-pyrroline-2-carboxylate + H2O. It carries out the reaction trans-4-hydroxy-L-proline = cis-4-hydroxy-D-proline. Functionally, catalyzes the dehydration of trans-3-hydroxy-L-proline (t3LHyp) to Delta(1)-pyrroline-2-carboxylate (Pyr2C). Can also catalyze the epimerization of trans-4-hydroxy-L-proline (t4LHyp) to cis-4-hydroxy-D-proline (c4DHyp), albeit with 30-fold lower efficiency. Is likely involved in both degradation pathways that convert t3LHyp to L-proline and t4LHyp to alpha-ketoglutarate, which would allow A.tumefaciens to grow on t3LHyp or t4LHyp as a sole carbon source. Displays no proline racemase activity. The protein is Trans-3-hydroxy-L-proline dehydratase of Agrobacterium fabrum (strain C58 / ATCC 33970) (Agrobacterium tumefaciens (strain C58)).